Here is a 252-residue protein sequence, read N- to C-terminus: Acyl-coenzyme A diphosphatase FITM2 (252 aa).

At 1–25 (MAAAVAGSLVDKLVCLWRQPYTRIY) the chain is on the cytoplasmic side. A helical membrane pass occupies residues 26–46 (LPHLFFCISLVGSVLKNAELV). At 47-59 (PESYFSSSRNVLN) the chain is on the lumenal side. The helical transmembrane segment at 60 to 80 (LYFVKVSWGWTIVLLLPFIAY) threads the bilayer. Residues 81–94 (SNFYIKSHMFALRR) lie on the Cytoplasmic side of the membrane. The chain crosses the membrane as a helical span at residues 95–115 (LTSLLVATLVWYICTETFFYI). The Lumenal portion of the chain corresponds to 116 to 156 (EDITGSCYESNTMVVIRGEFDTKAACRKAGFFWDGFDISGH). Residue His156 is part of the active site. The chain crosses the membrane as a helical span at residues 157 to 177 (SFILSYSSLVIMEEMVPMLHI). At 178-190 (QPAYRNPPLDCLY) the chain is on the cytoplasmic side. The helical transmembrane segment at 191–211 (LALNVIVAIWIWMFGCTSVYF) threads the bilayer. Residue His212 is part of the active site. Residues 212 to 223 (HDIIDKILGTSC) are Lumenal-facing. Residues 224-244 (GILGWYMTYKVWYVKLFSPGL) traverse the membrane as a helical segment. Topologically, residues 245-252 (PPQPKQHT) are cytoplasmic.

Belongs to the FIT family. FIT2 subfamily. In terms of tissue distribution, widely expressed.

The protein localises to the endoplasmic reticulum membrane. The enzyme catalyses an acyl-CoA + H2O = an acyl-4'-phosphopantetheine + adenosine 3',5'-bisphosphate + 2 H(+). Functionally, fatty acyl-coenzyme A (CoA) diphosphatase that hydrolyzes fatty acyl-CoA to yield acyl-4'-phosphopantetheine and adenosine 3',5'-bisphosphate. Preferentially hydrolyzes unsaturated long-chain acyl-CoA substrates in the endoplasmic reticulum (ER) lumen. This catalytic activity is required for maintaining ER structure and for lipid droplets (LDs) biogenesis, which are lipid storage organelles involved in maintaining lipid and energy homeostasis. Required for lipid droplet accumulation in liver and intestine during embryogenesis. May directly bind to diacylglycerol (DAGs) and triacylglycerol, which is also important for LD biogenesis. May support directional budding of nacent LDs from the ER into the cytosol by reducing DAG levels at sites of LD formation. May play a role in the regulation of cell morphology, ER morphology and cytoskeletal organization. The chain is Acyl-coenzyme A diphosphatase FITM2 from Danio rerio (Zebrafish).